A 227-amino-acid chain; its full sequence is Probable septum site-determining protein MinC (227 aa).

Belongs to the MinC family. Interacts with MinD and FtsZ.

Its function is as follows. Cell division inhibitor that blocks the formation of polar Z ring septums. Rapidly oscillates between the poles of the cell to destabilize FtsZ filaments that have formed before they mature into polar Z rings. Prevents FtsZ polymerization. This chain is Probable septum site-determining protein MinC, found in Geobacillus kaustophilus (strain HTA426).